The primary structure comprises 708 residues: Assimilatory nitrate reductase (708 aa).

The 59-residue stretch at 15-73 (TKQVPTTCMRCAVGCGHVHLGSENAYGLETVRGDPSHPVNNGLACGRGIRESADPAGEW) folds into the 4Fe-4S Mo/W bis-MGD-type domain. Positions 22, 25, 29, and 59 each coordinate [4Fe-4S] cluster. A disordered region spans residues 586–613 (TTGREADGYNTGVRSRSDTPEEPVARVN).

Belongs to the prokaryotic molybdopterin-containing oxidoreductase family. NasA/NapA/NarB subfamily. As to quaternary structure, is probably a monomer. Initially characterized as a dimer of proteins with a MW of 105 and 50 kDa. [4Fe-4S] cluster is required as a cofactor. It depends on Mo-bis(molybdopterin guanine dinucleotide) as a cofactor.

The protein resides in the cytoplasm. It carries out the reaction nitrite + 2 oxidized [2Fe-2S]-[ferredoxin] + H2O = nitrate + 2 reduced [2Fe-2S]-[ferredoxin] + 2 H(+). It functions in the pathway nitrogen metabolism; nitrate reduction (assimilation). With respect to regulation, inhibited by cyanide and azide. Functionally, nitrate reductase is a key enzyme involved in the first step of nitrate assimilation. Catalyzes the reduction of nitrate to nitrite, using ferredoxin as the electron donor. Can use reduced methyl viologen but neither NADPH nor NADH as electron donors. In Haloferax mediterranei (strain ATCC 33500 / DSM 1411 / JCM 8866 / NBRC 14739 / NCIMB 2177 / R-4) (Halobacterium mediterranei), this protein is Assimilatory nitrate reductase.